The sequence spans 1522 residues: MRNCLPMELNLRKGDKVWVEDKDLAWIAADVLDSFDNKLHVETSTGKKVFVSPEKLFRRDPDDEEHNGVDDMTKLTYLHEAGVLYNLQRRYALNDIYTYTGSILIAVNPFKKLPHLYNGHMMEQYMGAPFGELSPHVFAVSDVAYRAMIDDSRSQSILVSGESGAGKTETTKLIMQYLTFVGGRATDDDRSVEQQVLESNPLLEAFGNAKTVRNDNSSRFGKFVEIQFDTNGRISGAAIRTYLLERSRVVRITDPERNYHCFYQLCASGNDAEKYKLSNPRQFHYLNQSKTYELEGVSSAEEYKNTRRAMDIVGISQDEQEGIFRTLAAILHLGNVEFSSGREHDSSVVKDPESRHHLQMAADLFKCDANLLLASLCTRSILTREGIIIKALDPNAAVTSRDTLAKTVYAHLFDWLVDKINKSVGQDPESRFQIGVLDIYGFECFKNNSFEQFCINFANEKLQQHFNEHVFKMEQDEYRKEEINWSYIEFIDNQDVLDLIEKKPIGVIALLDEACMFPRSTHESFSMKLFQNFRFHPRLEKPKFSETDFTLSHYAGKVTYQTEAFLDKNRDYTIVEHCNLLSSSKCPFVAGIFPSAPEESTRSSYKFSSVSSRFKQQLQALMETLSKTEPHYVRCVKPNSLNRPQKFESLSVLHQLRCGGVLEAVRISLAGYPTRRNYSDFVDRFGLLAPEFMDESNDEQALTEKILSKLGLGNYQLGRTKVFLRAGQIGILDSRRAEVLDASARLIQRRLRTFVTHQNFISARASAISIQAYCRGCLSRNAYATRRNAAAAVLVQKHVRRWLSRCAFVKLVSAAIVLQSCIRADSTRLKFSHQKEHRAASLIQAHWRIHKFRSAFRHRQSSIIAIQCRWRQKLAKREFRKLKQVANEAGALRLAKTKLEKRLEDLEWRLQLEKRLRTSGEEAKSSEISKLQKTLESFSLKLDAARLATINECNKNAVLEKQLDISMKEKSAVERELNGMVELKKDNALLKNSMNSLEKKNRVLEKELLNAKTNCNNTLQKLKEAEKRCSELQTSVQSLEEKLSHLENENQVLMQKTLITSPERIGQILGEKHSSAVVPAQNDRRSVFETPTPSKHIMPFSHSLSESRRSKLTAERNLENYELLSRCIKENLGFNDDKPLAACVIYKCLLHWRAFESESTAIFNIIIEGINEALKGGDENGVLPYWLSNASALLCLLQRNLRSNSFLNASAQRSGRAAYGVKSPFKLHGPDDGASHIEARYPALLFKQQLTACVEKIYGLIRDNLKKELSPLLGSCIQAPKASRGIAGKSRSPGGVPQQSPSSQWESILKFLDSLMSRLRENHVPSFFIRKLVTQVFSFINLSLFNSLLLRRECCTFSNGEYVKSGISELEKWIANAKEEFAGTSWHELNYIRQAVGFLVIHQKKKKSLDEIRQDLCPVLTIRQIYRISTMYWDDKYGTQSVSSEVVSQMRVLVDKDNQKQTSNSFLLDDDMSIPFSAEDIDKAIPVLDPSEIEPPKFVSEYTCAQSLVKKPSIASTSKQII.

In terms of domain architecture, Myosin N-terminal SH3-like spans 12-61 (RKGDKVWVEDKDLAWIAADVLDSFDNKLHVETSTGKKVFVSPEKLFRRDP). The Myosin motor domain occupies 67–737 (NGVDDMTKLT…QIGILDSRRA (671 aa)). Residues 161–168 (GESGAGKT) and 214–222 (NDNSSRFGK) contribute to the ATP site. Actin-binding regions lie at residues 499 to 533 (LIEKKPIGVIALLDEACMFPRSTHESFSMKLFQNF), 535 to 558 (FHPRLEKPKFSETDFTLSHYAGKV), 593 to 618 (FPSAPEESTRSSYKFSSVSSRFKQQL), and 618 to 640 (LQALMETLSKTEPHYVRCVKPNS). 5 consecutive IQ domains span residues 763 to 792 (ARASAISIQAYCRGCLSRNAYATRRNAAAA), 788 to 817 (NAAAAVLVQKHVRRWLSRCAFVKLVSAAIV), 811 to 840 (LVSAAIVLQSCIRADSTRLKFSHQKEHRAA), 836 to 865 (EHRAASLIQAHWRIHKFRSAFRHRQSSIIA), and 859 to 888 (RQSSIIAIQCRWRQKLAKREFRKLKQVANE). Residues 889–1059 (AGALRLAKTK…NQVLMQKTLI (171 aa)) are a coiled coil. The Dilute domain occupies 1164–1456 (NIIIEGINEA…VSQMRVLVDK (293 aa)).

It belongs to the TRAFAC class myosin-kinesin ATPase superfamily. Myosin family. Plant myosin class XI subfamily. In terms of assembly, homodimer. Interacts with MYOB1 and MYOB7. Interacts with WIT1 and WIT2. Core component of the LINC complex which is composed of inner nuclear membrane SUN domain-containing proteins coupled to outer nuclear membrane WIP and WIT proteins. The LINC complex also involves nucleoskeletal proteins CRWN/LINC and possibly KAKU4 and the cytoskeletal myosin KAKU1.

The protein localises to the cytoplasm. It is found in the nucleus membrane. Myosin heavy chain that is required for the cell cycle-regulated transport of various organelles and proteins for their segregation. Functions by binding with its tail domain to receptor proteins on organelles and exerting force with its N-terminal motor domain against actin filaments, thereby transporting its cargo along polarized actin cables. Involved in trafficking of Golgi stacks and mitochondria. Plays a role in nuclear shape determination. Drives nuclear movement along actin filaments. As component of the SUN-WIP-WIT2-KAKU1 complex, mediates the transfer of cytoplasmic forces to the nuclear envelope (NE), leading to nuclear shape changes. The sequence is that of Myosin-15 (XI-I) from Arabidopsis thaliana (Mouse-ear cress).